The following is a 701-amino-acid chain: Elongation factor G (701 aa).

Residues 8–290 (ARYRNIGISA…AVIEYLPAPT (283 aa)) form the tr-type G domain. GTP-binding positions include 17-24 (AHIDAGKT), 88-92 (DTPGH), and 142-145 (NKMD).

The protein belongs to the TRAFAC class translation factor GTPase superfamily. Classic translation factor GTPase family. EF-G/EF-2 subfamily.

Its subcellular location is the cytoplasm. In terms of biological role, catalyzes the GTP-dependent ribosomal translocation step during translation elongation. During this step, the ribosome changes from the pre-translocational (PRE) to the post-translocational (POST) state as the newly formed A-site-bound peptidyl-tRNA and P-site-bound deacylated tRNA move to the P and E sites, respectively. Catalyzes the coordinated movement of the two tRNA molecules, the mRNA and conformational changes in the ribosome. This chain is Elongation factor G, found in Sodalis glossinidius (strain morsitans).